Here is a 273-residue protein sequence, read N- to C-terminus: Dermonecrotic toxin LhSicTox-alphaIA2avii (273 aa).

The active site involves H5. Positions 25 and 27 each coordinate Mg(2+). H41 (nucleophile) is an active-site residue. Cystine bridges form between C45/C51 and C47/C190. D85 contributes to the Mg(2+) binding site.

The protein belongs to the arthropod phospholipase D family. Class II subfamily. Mg(2+) serves as cofactor. As to expression, expressed by the venom gland.

It is found in the secreted. The enzyme catalyses an N-(acyl)-sphingosylphosphocholine = an N-(acyl)-sphingosyl-1,3-cyclic phosphate + choline. It catalyses the reaction an N-(acyl)-sphingosylphosphoethanolamine = an N-(acyl)-sphingosyl-1,3-cyclic phosphate + ethanolamine. The catalysed reaction is a 1-acyl-sn-glycero-3-phosphocholine = a 1-acyl-sn-glycero-2,3-cyclic phosphate + choline. It carries out the reaction a 1-acyl-sn-glycero-3-phosphoethanolamine = a 1-acyl-sn-glycero-2,3-cyclic phosphate + ethanolamine. Dermonecrotic toxins cleave the phosphodiester linkage between the phosphate and headgroup of certain phospholipids (sphingolipid and lysolipid substrates), forming an alcohol (often choline) and a cyclic phosphate. This toxin acts on sphingomyelin (SM). It may also act on ceramide phosphoethanolamine (CPE), lysophosphatidylcholine (LPC) and lysophosphatidylethanolamine (LPE), but not on lysophosphatidylserine (LPS), and lysophosphatidylglycerol (LPG). It acts by transphosphatidylation, releasing exclusively cyclic phosphate products as second products. Induces dermonecrosis, hemolysis, increased vascular permeability, edema, inflammatory response, and platelet aggregation. In Loxosceles hirsuta (Recluse spider), this protein is Dermonecrotic toxin LhSicTox-alphaIA2avii.